The sequence spans 436 residues: GTPase Der (436 aa).

EngA-type G domains follow at residues Pro4 to Ile167 and Ile175 to Asn351. Residues Gly10–Ser17, Asp57–Ile61, Asn119–Asp122, Gly181–Ser188, Asp229–Met233, and Asn294–Asp297 contribute to the GTP site. The region spanning Leu352–Lys436 is the KH-like domain.

Belongs to the TRAFAC class TrmE-Era-EngA-EngB-Septin-like GTPase superfamily. EngA (Der) GTPase family. Associates with the 50S ribosomal subunit.

In terms of biological role, GTPase that plays an essential role in the late steps of ribosome biogenesis. The polypeptide is GTPase Der (Lactococcus lactis subsp. cremoris (strain SK11)).